Consider the following 423-residue polypeptide: Glutamate-1-semialdehyde 2,1-aminomutase (423 aa).

K259 carries the post-translational modification N6-(pyridoxal phosphate)lysine.

It belongs to the class-III pyridoxal-phosphate-dependent aminotransferase family. HemL subfamily. In terms of assembly, homodimer. Pyridoxal 5'-phosphate serves as cofactor.

It is found in the cytoplasm. It catalyses the reaction (S)-4-amino-5-oxopentanoate = 5-aminolevulinate. Its pathway is porphyrin-containing compound metabolism; protoporphyrin-IX biosynthesis; 5-aminolevulinate from L-glutamyl-tRNA(Glu): step 2/2. The sequence is that of Glutamate-1-semialdehyde 2,1-aminomutase from Thermosipho africanus (strain TCF52B).